Here is a 709-residue protein sequence, read N- to C-terminus: PP2C-like domain-containing protein CG9801 (709 aa).

Disordered regions lie at residues aspartate 121 to arginine 222, leucine 503 to lysine 530, and glycine 678 to phenylalanine 709. The span at proline 130–threonine 143 shows a compositional bias: polar residues. The segment covering alanine 182–alanine 196 has biased composition (low complexity). Positions asparagine 197–aspartate 217 are enriched in polar residues. Residues serine 259–leucine 503 form the PPM-type phosphatase domain.

The polypeptide is PP2C-like domain-containing protein CG9801 (Drosophila melanogaster (Fruit fly)).